Consider the following 257-residue polypeptide: 3-methyl-2-oxobutanoate hydroxymethyltransferase (257 aa).

The Mg(2+) site is built by Asp42 and Asp86. Residues 42-43 (DS), Asp86, and Lys116 contribute to the 3-methyl-2-oxobutanoate site. Glu118 serves as a coordination point for Mg(2+). Glu185 functions as the Proton acceptor in the catalytic mechanism.

This sequence belongs to the PanB family. As to quaternary structure, homodecamer; pentamer of dimers. It depends on Mg(2+) as a cofactor.

The protein localises to the cytoplasm. The catalysed reaction is 3-methyl-2-oxobutanoate + (6R)-5,10-methylene-5,6,7,8-tetrahydrofolate + H2O = 2-dehydropantoate + (6S)-5,6,7,8-tetrahydrofolate. Its pathway is cofactor biosynthesis; (R)-pantothenate biosynthesis; (R)-pantoate from 3-methyl-2-oxobutanoate: step 1/2. In terms of biological role, catalyzes the reversible reaction in which hydroxymethyl group from 5,10-methylenetetrahydrofolate is transferred onto alpha-ketoisovalerate to form ketopantoate. The sequence is that of 3-methyl-2-oxobutanoate hydroxymethyltransferase from Prochlorococcus marinus (strain MIT 9515).